Consider the following 1053-residue polypeptide: uncharacterized protein (1053 aa).

This sequence belongs to the mycobacterial PPE family.

This is an uncharacterized protein from Mycobacterium tuberculosis (strain ATCC 25618 / H37Rv).